The following is a 336-amino-acid chain: Nuclear envelope-associated protein 1 (336 aa).

A coiled-coil region spans residues C125–K261. The Bipartite nuclear localization signal motif lies at K240–K261. The chain crosses the membrane as a helical span at residues F313 to L330.

In terms of assembly, forms heteromers with NEAP2 and NEAP3. Interacts with SUN1; SUN2 and bZIP18.

Its subcellular location is the nucleus inner membrane. The protein localises to the nucleus. It is found in the nucleoplasm. The sequence is that of Nuclear envelope-associated protein 1 from Arabidopsis thaliana (Mouse-ear cress).